Reading from the N-terminus, the 469-residue chain is ATP-dependent protease ATPase subunit HslU (469 aa).

ATP is bound by residues I21, G63 to E68, D282, E347, and R419.

This sequence belongs to the ClpX chaperone family. HslU subfamily. As to quaternary structure, a double ring-shaped homohexamer of HslV is capped on each side by a ring-shaped HslU homohexamer. The assembly of the HslU/HslV complex is dependent on binding of ATP.

The protein resides in the cytoplasm. Its function is as follows. ATPase subunit of a proteasome-like degradation complex; this subunit has chaperone activity. The binding of ATP and its subsequent hydrolysis by HslU are essential for unfolding of protein substrates subsequently hydrolyzed by HslV. HslU recognizes the N-terminal part of its protein substrates and unfolds these before they are guided to HslV for hydrolysis. The chain is ATP-dependent protease ATPase subunit HslU from Petrotoga mobilis (strain DSM 10674 / SJ95).